Consider the following 78-residue polypeptide: MSNLRLTIAVFLAALFQTLWWKPRGKRPQSNFHAKRIRTVLQTLLVMLCTDYRCDKGLCKCHGFGGEKENPTAAPLTA.

A signal peptide spans 1 to 21; it reads MSNLRLTIAVFLAALFQTLWW.

The protein belongs to the DEFL family.

The protein localises to the secreted. This Arabidopsis thaliana (Mouse-ear cress) protein is Putative defensin-like protein 288.